A 75-amino-acid polypeptide reads, in one-letter code: DNA-directed RNA polymerase subunit omega (75 aa).

The protein belongs to the RNA polymerase subunit omega family. In cyanobacteria the RNAP catalytic core is composed of 2 alpha, 1 beta, 1 beta', 1 gamma and 1 omega subunit. When a sigma factor is associated with the core the holoenzyme is formed, which can initiate transcription.

The catalysed reaction is RNA(n) + a ribonucleoside 5'-triphosphate = RNA(n+1) + diphosphate. Promotes RNA polymerase assembly. Latches the N- and C-terminal regions of the beta' subunit thereby facilitating its interaction with the beta and alpha subunits. The polypeptide is DNA-directed RNA polymerase subunit omega (Synechococcus sp. (strain CC9605)).